The primary structure comprises 145 residues: Large ribosomal subunit protein uL13 (145 aa).

This sequence belongs to the universal ribosomal protein uL13 family. In terms of assembly, part of the 50S ribosomal subunit. Binds to Obg (AC P20964).

Functionally, this protein is one of the early assembly proteins of the 50S ribosomal subunit, although it is not seen to bind rRNA by itself. It is important during the early stages of 50S assembly. The chain is Large ribosomal subunit protein uL13 from Bacillus subtilis (strain 168).